The chain runs to 1699 residues: Hybrid signal transduction histidine kinase E (1699 aa).

Disordered regions lie at residues 1-32 (MDKL…NLEN) and 58-97 (NNII…NPNV). A compositionally biased stretch (low complexity) spans 7–32 (NNNLSPPSSPSSSTTTPNLSSTNLEN). A run of 6 helical transmembrane segments spans residues 142 to 162 (CILL…LIFL), 164 to 184 (SFYP…IVST), 191 to 211 (LVAL…FLQI), 238 to 258 (LNFL…IFFP), 262 to 282 (FSIT…LISI), and 295 to 315 (NLIV…ILSI). The span at 412–432 (ITNGGNNKQTSTTSANSTPRY) shows a compositional bias: polar residues. Disordered regions lie at residues 412–439 (ITNG…NNNN) and 542–593 (LLNN…NISN). Residues 544 to 593 (NNNNNNNNNNNNNNNNNNNNNNNNNNSNNNNNNNSNNNNNNNNINNNISN) show a composition bias toward low complexity. Residues 678–950 (TVSHEVRTPI…AFSFTSILST (273 aa)) form the Histidine kinase domain. A Phosphohistidine; by autocatalysis modification is found at His-681. Disordered regions lie at residues 819–866 (NNNN…NNNN), 1018–1054 (NNNN…NDNN), 1186–1239 (KKQQ…RKSS), 1252–1294 (MVQV…NPNN), and 1351–1406 (SIPI…SPPP). Residues 1198–1212 (MGDTLSSTKSPQYTN) are compositionally biased toward polar residues. Over residues 1219–1239 (SSSSNGSLNKSNRSNLLRKSS) the composition is skewed to low complexity. Positions 1271-1282 (KGNNSNPNSTEL) are enriched in polar residues. Low complexity-rich tracts occupy residues 1283–1294 (NSTNSVNGNPNN) and 1355–1392 (NINN…NNNN). One can recognise a Response regulatory domain in the interval 1575–1695 (NALIVDDTEL…TLKDTLLKWG (121 aa)). Asp-1625 bears the 4-aspartylphosphate mark.

The protein resides in the membrane. It carries out the reaction ATP + protein L-histidine = ADP + protein N-phospho-L-histidine.. May act in a signal transduction pathway. This protein undergoes an ATP-dependent autophosphorylation at a conserved histidine residue in the kinase core, and a phosphoryl group is then transferred to a conserved aspartate residue in the receiver domain. The chain is Hybrid signal transduction histidine kinase E (dhkE) from Dictyostelium discoideum (Social amoeba).